Reading from the N-terminus, the 345-residue chain is Aminopeptidase YpdE (345 aa).

Residues His62 and Asp166 each coordinate a divalent metal cation. The active-site Proton acceptor is Glu198. The a divalent metal cation site is built by Glu199, Asp221, and His308.

It belongs to the peptidase M42 family. Co(2+) serves as cofactor. Ni(2+) is required as a cofactor. It depends on Mn(2+) as a cofactor. The cofactor is Cu(2+).

In terms of biological role, has a broad aminopeptidase activity on non-blocked peptides by progressively cleaving amino acids off the peptide substrate. Aminopeptidase activity stops at the residue before the first proline in the peptide. Cannot cleave when proline is the first N-terminal residue. In Escherichia coli (strain K12), this protein is Aminopeptidase YpdE (ypdE).